The following is a 165-amino-acid chain: MDIKVVKGSITEVDADVIVNPANSRGLMGGGVAVVIKRLGGEEIEREAVEKAPIPVGSAVLTTAGKLKFKGVIHAPTMEEPAMPSSEEKVRKATRAALELADKECFKIVAIPGMGTGVGGVPKEVAARAMVEEIRKFEPKCLEKVILVDIDEEMVEAWEKVLGLR.

A Macro domain is found at 1–165 (MDIKVVKGSI…EAWEKVLGLR (165 aa)).

This is an uncharacterized protein from Aquifex aeolicus (strain VF5).